We begin with the raw amino-acid sequence, 1877 residues long: MDCIDKSIRRESLRKLGCLPDHGWNLFVQSSNRYSKLLEADSKLFKAQRIEDTVLSICEVTLENKASENALTLFQQLRFYLLNYLFLEDTSEYKSVLCSLDESVYPNLLPLTANICPCILKALLALVRQHRELSSDIVKFLNSIFLALTRILNTPHSSNNNPTHTKTTIFEKVFYASHLGFFFEEIADACISALPQDACLWAMEVCNTILVSDLPCKLIDLHNDSFLHHSNYYAGFGLSYYLYLSSMKAYINSSGCLWYEDATSFWDIVKHRPSSPEEKPFLTQFQSILNLSDKFLSKTGTLRLQEKLGTSCNLFFVLVLKLALLSSSYIGFVPYTYSDWINVLLGSISEDPELLPHLIELMASLACVFPTHFQFAMKRLRLIAIYAPRFDDGNVTYAQLASRKLAQLFNYSSRDTAITSIYQFANLLSPADTPDSYLAAPKERLSISDNMSSSSSQTATVNTISNYLNVIDSVREIALTVNDEKIYGLAISLLIQKFSRKFDSRVSTELVRTLADISTKANDRDFSILVQFYSIQNKMLVKNGDEALTIAICDSRCLIARGTESNSFKRSDLLKSLLEEIIHIGIVRDTPAPELKGYYFGMSKAVQALVECVAGTDWSSLPKEEMYPALFRDMWFTLVINRFRYSVDLGETLEVDLENIAKNSPLLVFEDFGSNFESNLELNTVLRTHIEHSVISQIKSELLVRVPNIDLKPLSTSEICFLSAVLLLESLRCKSNKLSALVEYLLDPSLRDSQLPQSIRAIALYNLTSFVESLSKERRVASSTIDEFQKLLCLCCNRVDCVRQLALECMNYIMETLPHLLGIKEILFSVLELSSLLWKARTEECTDQYVPQLLYKSNKLNLSVILSDIYSCREEVLFQFNRHARSWIQNSSKAIPYQVKNLLESYLADFVDFDDLEVVELGRSLAVELGTRIVSSDRDNFVLPAFGNWTPDTSSEFMAEYTIRQRYSHVDNSILNIEGDMSTDRIDLILNEKSKLFETHLAALKSLEDDILQGNTVSPQRLRNEVRKAAAHAVQEPIFQFSVLARKIVRIPFLDFSPSSFKLGITLWNWMMNQVPSFSSFLISNIIRNWKNEIVTEKRGYFSTAKSKSPLALPMTYSPTERASFLSYKNKVMSQMIPHLLLLQLIAGNFEGFWYGDRQTAKLIVHFMKFVLKKITSMEVNLNVLTRELHFKFVSFGLRIAENLLNSPLGSRFYNLCVDAGLCWFSGMPNWTYGADKLHVAAEISVMRSLRDKLDSFLLRYPLKVSTTLKQKLLIILLNNEMYMLYTWLTPVLHGRNVRMVEPIPDSDAASSPITLEMLQVAWNVSPNIVLYAPKRFQNAPLKQMALNFVIANPFTSVKHEVALEYLFEHYPSGEFPIDRKFILYWEPMYPVSGPVMFMPNVKWNPQLLQYTMRSMESYPVSVTFFYVPQIVQSLRYDSMGYAESFILETSGTSQLFAHQILWNMKANLYKDEAATVPDSIKPILDRVMDKMINSLSGEDKQFYEREFTFFNEVTSISGKLKPFIRKSKPEKKAKIDEEMKKIKLDVGVYLPSNPDGVIVGIDRKSGKPLQSHAKAPFMATFKIRKEKLVDADPEELAVNGTEEEAGDSAKKQTYEVWQSAIFKVGDDCRQDVLTLQLIAMFKNIFNSVGLDVYLFPYRVTATNPGCGVIDVLPNCISRDMLGREAVNGLYDYFRTKFGDEDSIAFQKARSNFVQSMAAYSVITYLLQFKDRHNGNIMIDDQGHILHIDFGFIFDIAPGGITFESAPFKLTTEMIAVMGGSNKSQPFQWFQELCVKAFLACRPYAHYICQAVEVMLDSGLPCFKGQLTITHCLERFALNLNERQASTFMLHLIEQSYANKRTLMYDQFQKATNGIPY.

Residues 1305-1491 (PDSDAASSPI…KPILDRVMDK (187 aa)) enclose the PIK helical domain. A pleckstrin homology (PH) domain conferring phosphoinositide binding specificity region spans residues 1492 to 1625 (MINSLSGEDK…EVWQSAIFKV (134 aa)). A PI3K/PI4K catalytic domain is found at 1593 to 1861 (DPEELAVNGT…LIEQSYANKR (269 aa)). Positions 1599 to 1605 (VNGTEEE) are G-loop. Residues 1728–1736 (QFKDRHNGN) are catalytic loop. Residues 1747 to 1771 (HIDFGFIFDIAPGGITFESAPFKLT) are activation loop.

The protein belongs to the PI3/PI4-kinase family. Type III PI4K subfamily.

It localises to the cytoplasm. It carries out the reaction a 1,2-diacyl-sn-glycero-3-phospho-(1D-myo-inositol) + ATP = a 1,2-diacyl-sn-glycero-3-phospho-(1D-myo-inositol 4-phosphate) + ADP + H(+). Acts on phosphatidylinositol (PI) in the first committed step in the production of the second messenger inositol 1,4,5,-trisphosphate. This chain is Phosphatidylinositol 4-kinase stt4 (stt4), found in Schizosaccharomyces pombe (strain 972 / ATCC 24843) (Fission yeast).